The primary structure comprises 439 residues: GTPase Der (439 aa).

EngA-type G domains follow at residues 2–166 (SVVA…PAPA) and 176–351 (TRLA…IEFN). GTP-binding positions include 8–15 (GRPNVGKS), 55–59 (DTGGF), 118–121 (NKVD), 182–189 (GRPNVGKS), 229–233 (DTAGI), and 294–297 (NKWD). The region spanning 352–436 (RQVPTGVLNR…PIRLKFKDRN (85 aa)) is the KH-like domain.

This sequence belongs to the TRAFAC class TrmE-Era-EngA-EngB-Septin-like GTPase superfamily. EngA (Der) GTPase family. In terms of assembly, associates with the 50S ribosomal subunit.

Functionally, GTPase that plays an essential role in the late steps of ribosome biogenesis. The chain is GTPase Der from Syntrophotalea carbinolica (strain DSM 2380 / NBRC 103641 / GraBd1) (Pelobacter carbinolicus).